The chain runs to 142 residues: MNSKHSYVELKDKVIVPGWPTLMLEIDFVGGTSRNQFLNIPFLSVKEPLQLPREKKLTDYFTIDVEPAGHSLVNIYFQIDDFLLLTLNSLSVYKDPIRKYMFLRLNKEQSKHAINAAFNVFSYRLRNIGVGPLGPDIRSSGP.

Residues 64–66 (DVE) and A117 each bind GMP.

Homooligomer. Homotetramer. Interacts with phosphoprotein P. Binds to ssRNA. In terms of processing, not glycosylated.

The protein resides in the virion. The protein localises to the host cytoplasm. It is found in the host cell membrane. In terms of biological role, plays a crucial role in virion assembly and budding. The sequence is that of Matrix protein (M) from Bos taurus (Bovine).